Reading from the N-terminus, the 118-residue chain is Large ribosomal subunit protein bL20 (118 aa).

This sequence belongs to the bacterial ribosomal protein bL20 family.

In terms of biological role, binds directly to 23S ribosomal RNA and is necessary for the in vitro assembly process of the 50S ribosomal subunit. It is not involved in the protein synthesizing functions of that subunit. This is Large ribosomal subunit protein bL20 from Klebsiella pneumoniae (strain 342).